Reading from the N-terminus, the 285-residue chain is Inositol polyphosphate 1-phosphatase (285 aa).

Mg(2+) is bound by residues E68, D106, L108, and D109. The 1D-myo-inositol 1,4-bisphosphate site is built by D109, G110, T111, S173, G195, S197, and K200. Position 223 (D223) interacts with Mg(2+).

Belongs to the inositol monophosphatase superfamily. In terms of assembly, monomer. Mg(2+) serves as cofactor.

It localises to the cytoplasm. It carries out the reaction 1D-myo-inositol 1,4-bisphosphate + H2O = 1D-myo-inositol 4-phosphate + phosphate. It catalyses the reaction adenosine 3',5'-bisphosphate + H2O = AMP + phosphate. Its activity is regulated as follows. Partially inhibited by Li(2+). In terms of biological role, catalyzes the hydrolysis of the 1-position phosphate from inositol 1,4-bisphosphate. Is also able to convert 3'(2')-phosphoadenosine 5'-phosphate (PAP) to AMP but with less efficiency. This Entamoeba histolytica (strain ATCC 30459 / HM-1:IMSS / ABRM) protein is Inositol polyphosphate 1-phosphatase.